The following is a 317-amino-acid chain: Transaldolase (317 aa).

Lys-132 functions as the Schiff-base intermediate with substrate in the catalytic mechanism.

This sequence belongs to the transaldolase family. Type 1 subfamily. In terms of assembly, homodimer.

It localises to the cytoplasm. It carries out the reaction D-sedoheptulose 7-phosphate + D-glyceraldehyde 3-phosphate = D-erythrose 4-phosphate + beta-D-fructose 6-phosphate. It participates in carbohydrate degradation; pentose phosphate pathway; D-glyceraldehyde 3-phosphate and beta-D-fructose 6-phosphate from D-ribose 5-phosphate and D-xylulose 5-phosphate (non-oxidative stage): step 2/3. Functionally, transaldolase is important for the balance of metabolites in the pentose-phosphate pathway. This Yersinia pseudotuberculosis serotype IB (strain PB1/+) protein is Transaldolase.